The sequence spans 331 residues: Dof zinc finger protein DOF1.1 (331 aa).

The Dof-type zinc finger occupies Leu77–Lys131. Positions 79, 82, 104, and 107 each coordinate Zn(2+). Disordered stretches follow at residues Pro121–Gln166 and Glu291–Leu331. A compositionally biased stretch (low complexity) spans Asn135 to Gln160. Polar residues predominate over residues Gly305–Tyr316.

Interacts with OBF4. Expressed in the vasculature (mainly in the phloem and associated cell files) of cotyledons, leaves, roots, flower stalks and petals. The PEAR proteins (e.g. DOF2.4, DOF5.1, DOF3.2, DOF1.1, DOF5.6 and DOF5.3) form a short-range concentration gradient that peaks at protophloem sieve elements (PSE).

The protein localises to the nucleus. Its function is as follows. Transcription factor that binds specifically to a 5'-AA[AG]G-3' consensus core sequence. Enhances the DNA binding of OBF transcription factors to OCS elements. Involved in the regulation of root development. The PEAR proteins (e.g. DOF2.4, DOF5.1, DOF3.2, DOF1.1, DOF5.6 and DOF5.3) activate gene expression that promotes radial growth of protophloem sieve elements. Element of a regulatory network controlling indole glucosinolates (IGS) biosynthesis, probably by inducing the expression of accurate genes (e.g. CYP83B1). Promotes apical dominance. In Arabidopsis thaliana (Mouse-ear cress), this protein is Dof zinc finger protein DOF1.1.